Here is a 389-residue protein sequence, read N- to C-terminus: Jasmonate O-methyltransferase (389 aa).

Tyr18 lines the S-adenosyl-L-homocysteine pocket. A jasmonate-binding site is contributed by Gln25. Cys60, Asn65, Asp97, Leu98, Ser142, and Phe143 together coordinate S-adenosyl-L-homocysteine. Jasmonate-binding residues include His163 and Trp164. Residues Asn186, Asp272, Phe274, and Asn275 each coordinate Mg(2+).

The protein belongs to the methyltransferase superfamily. Type-7 methyltransferase family. It depends on Mg(2+) as a cofactor. Expressed in rosettes, cauline leaves and developing flowers but not in young seedlings.

It localises to the cytoplasm. Its subcellular location is the nucleus. It carries out the reaction jasmonate + S-adenosyl-L-methionine = methyl (-)-jasmonate + S-adenosyl-L-homocysteine. Its pathway is lipid metabolism; oxylipin biosynthesis. Catalyzes the methylation of jasmonate into methyljasmonate, a plant volatile that acts as an important cellular regulator mediating diverse developmental processes and defense responses. The sequence is that of Jasmonate O-methyltransferase from Arabidopsis thaliana (Mouse-ear cress).